We begin with the raw amino-acid sequence, 78 residues long: MKADIHPQYHETTVTCTCGSTFTTRSTKENGAISAEVCSQCHPFYTGKQKILDVGGRVEKFERRFGRRQPGQKVGGAK.

Zn(2+) is bound by residues Cys-16, Cys-18, Cys-38, and Cys-41.

Belongs to the bacterial ribosomal protein bL31 family. Type A subfamily. As to quaternary structure, part of the 50S ribosomal subunit. Requires Zn(2+) as cofactor.

Its function is as follows. Binds the 23S rRNA. The chain is Large ribosomal subunit protein bL31 from Parafrankia sp. (strain EAN1pec).